The following is a 250-amino-acid chain: uncharacterized protein (250 aa).

Residues His-182–Ala-205 are disordered. A compositionally biased stretch (pro residues) spans Thr-190–Pro-201. Residues Thr-230–Leu-250 traverse the membrane as a helical segment.

The protein belongs to the ascovirus HvAV ORF18 family.

It localises to the membrane. This is an uncharacterized protein from Spodoptera frugiperda ascovirus 1a (SfAV-1a).